Consider the following 366-residue polypeptide: Histidinol-phosphate aminotransferase (366 aa).

Lys228 bears the N6-(pyridoxal phosphate)lysine mark.

Belongs to the class-II pyridoxal-phosphate-dependent aminotransferase family. Histidinol-phosphate aminotransferase subfamily. Homodimer. The cofactor is pyridoxal 5'-phosphate.

It catalyses the reaction L-histidinol phosphate + 2-oxoglutarate = 3-(imidazol-4-yl)-2-oxopropyl phosphate + L-glutamate. It participates in amino-acid biosynthesis; L-histidine biosynthesis; L-histidine from 5-phospho-alpha-D-ribose 1-diphosphate: step 7/9. This is Histidinol-phosphate aminotransferase from Campylobacter fetus subsp. fetus (strain 82-40).